The sequence spans 793 residues: MSSHRDGAGADRITIKIHNMKRSASRSPGPASRSSLSRNSRSMGRGYDNGSGVPGDSPERLSPERMRRRLDRSPSRYGSPHREPYMRGPPPAERPAGYKVLCVSALPPKAPDDFIEETLYREYKKFGDFSVRLAHDLDERVAYVCFRTPEDAREAKHHKPRLIIYDKMAIVEPVYKSTTRPEYRPRGHSMSPPDYERYHYSRSPMGQGVPLDHRRPPIDPYDRYGPPHMHPHAVHPRDYRPLHHDYPHPPRGPPLHRGGHPHHLHGHAPPHQYAPMRPLAPRPHAPYEKPESKKDKFPNYLHHVQPEDDPLSTRTLFAGNLEVTIADDELRRIFGKYGVVDDIDIKRPPPGTGNAFAFVRYQNLDMAHRAKIELSGQYIGKFQCKIGYGKVTPATRMWIGGLGAWTSVTQLEREFDRFGAIKKIEYQKGEPYAYIQYETVEAATAAVKEMRGFPLGGPERRLRTDFAELPGATPAAPFKSSKPPYDESALEYRRPEYDPYYEESAAYAPRGGYSPYPPRGGYRGRGGYRGRGRGMYHYHNDVHRPPHPGSLAGSSSSVPPPGGVEDEWRRPPGESYDRGARSSSREPGVERSRSRSPLKRARSPGSDSDTSTRRNDALASASTVPDVARKCSTVWTGALILKSSLFPAKFHLTDGDTDIVESLMRDEEGKHNLRITQRLRLDPPKLDDVQKRIASSSSHAIFMGLAGSTNDTNCDDASVQTRPLRNLVSYLKQKEAAGVISLLNKETEATGVLYAFPPCDFSTELLKRTCHSLTEEGLKEDHLVIVVVRGGTA.

Disordered stretches follow at residues M1–E93 and H243–K296. Residues S25 to S42 show a composition bias toward low complexity. A compositionally biased stretch (basic residues) spans R257–A268. Basic and acidic residues predominate over residues A285 to K296. 2 RRM domains span residues R314–V391 and T395–L469. The segment at Y507–T623 is disordered. The segment covering G526–Y536 has biased composition (basic residues). The segment covering D566–R593 has biased composition (basic and acidic residues). Positions V624–G791 constitute an SPOC domain.

This sequence belongs to the RRM Spen family. In terms of assembly, component of the WMM complex, a N6-methyltransferase complex composed of a catalytic subcomplex, named MAC, and of an associated subcomplex, named MACOM. The MAC subcomplex is composed of Ime4/Mettl3 and Mettl14. The MACOM subcomplex is composed of fl(2)d, Flacc/Xio, Hakai, vir, and, in some cases of nito. Interacts with Sxl. Interacts with Hipk; leading to phosphorylation. Phosphorylated by Hipk at Ser-23, Ser-25 and/or Ser-27; the precise position if phosphorylation sites is unknown. Widely expressed. Shows some enrichment in the central nervous system.

It localises to the nucleus. In terms of biological role, RNA-binding protein that acts as an associated component of the WMM complex, a complex that mediates N6-methyladenosine (m6A) methylation of mRNAs. M6a modification plays a role in the efficiency of mRNA splicing and is required for sex determination. In the WMM complex, may act by binding target RNAs and recruiting the WMM complex. Required for sex determination and dosage compensation via Sxl alternative splicing: m6A methylation acts as a key regulator of Sxl pre-mRNA and promotes female-specific alternative splicing of Sxl, which determines female physiognomy. M6A methylation is also required for neuronal functions. Acts as a positive regulator of canonical Wg signaling during wing disk and eye development. The sequence is that of RNA-binding protein spenito from Drosophila melanogaster (Fruit fly).